We begin with the raw amino-acid sequence, 205 residues long: ATP synthase subunit b (205 aa).

Residues 51–69 (FAWRCLDFAVLLAIVVWAL) traverse the membrane as a helical segment.

Belongs to the ATPase B chain family. As to quaternary structure, F-type ATPases have 2 components, F(1) - the catalytic core - and F(0) - the membrane proton channel. F(1) has five subunits: alpha(3), beta(3), gamma(1), delta(1), epsilon(1). F(0) has three main subunits: a(1), b(2) and c(10-14). The alpha and beta chains form an alternating ring which encloses part of the gamma chain. F(1) is attached to F(0) by a central stalk formed by the gamma and epsilon chains, while a peripheral stalk is formed by the delta and b chains.

The protein localises to the cell inner membrane. In terms of biological role, f(1)F(0) ATP synthase produces ATP from ADP in the presence of a proton or sodium gradient. F-type ATPases consist of two structural domains, F(1) containing the extramembraneous catalytic core and F(0) containing the membrane proton channel, linked together by a central stalk and a peripheral stalk. During catalysis, ATP synthesis in the catalytic domain of F(1) is coupled via a rotary mechanism of the central stalk subunits to proton translocation. Component of the F(0) channel, it forms part of the peripheral stalk, linking F(1) to F(0). In Geotalea uraniireducens (strain Rf4) (Geobacter uraniireducens), this protein is ATP synthase subunit b.